The chain runs to 469 residues: Aryl-phospho-beta-D-glucosidase BglH (469 aa).

Glu-175 acts as the Proton donor in catalysis. Glu-368 (nucleophile) is an active-site residue.

The protein belongs to the glycosyl hydrolase 1 family.

The catalysed reaction is 6-phospho-beta-D-glucosyl-(1-&gt;4)-D-glucose + H2O = D-glucose 6-phosphate + D-glucose. In terms of biological role, catalyzes the hydrolysis of aryl-phospho-beta-D-glucosides such as 4-methylumbelliferyl-phospho-beta-D-glucopyranoside (MUG-P), phosphoarbutin and phosphosalicin. Plays a major role in the utilization of arbutin or salicin as the sole carbon source. BglA and BglH are the major proteins contributing to hydrolysis of MUG-P by extracts of late-exponential-phase or stationary-phase B.subtilis cells. The sequence is that of Aryl-phospho-beta-D-glucosidase BglH (bglH) from Bacillus subtilis (strain 168).